A 377-amino-acid chain; its full sequence is Short chain dehydrogenase gsfE (377 aa).

5 residues coordinate NADP(+): D89, Q121, Y226, A266, and S268. Residue Y226 is the Proton donor of the active site.

It belongs to the short-chain dehydrogenases/reductases (SDR) family. Highly divergent.

It catalyses the reaction dehydrogriseofulvin + NADPH + H(+) = griseofulvin + NADP(+). It participates in secondary metabolite biosynthesis; terpenoid biosynthesis. In terms of biological role, short chain dehydrogenase; part of the gene cluster that mediates the biosynthesis of griseofulvin, an important antifungal drug that has been in use for a long time for treating dermatophyte infections. The first step of the pathway is the formation of the heptaketide backbone by gsfA which is initiated by priming with acetyl-CoA, followed by sequential condensations of 6 malonyl-CoA units. The resulting benzophenone can undergo a spontaneous dehydration to form norlichexanthone. However, the true precursor for the griseofulvin biosynthesis is not norlichexanthone, but the heptaketide benzophenone that is O-methylated at 3-OH by gsfB to produce griseophenone D which is further methylated at 9-OH by gsfC to yield griseophenone C. Griseophenone C is then substrate of halogenase gsfI which is responsible for the regio-specific chlorination at the C13 position to form griseophenone B. The cytochrome P450 gsfF catalyzes the coupling of orcinol and phloroglucinol rings in griseophenone B to form desmethyl-dehydrogriseofulvin A which is further methylated at 5-OH by gsfD to yield dehydrogriseofulvin. Finally, gsfE performs stereospecific reduction of enone 18 of dehydrogriseofulvin to afford the final product griseofulvin. This Penicillium aethiopicum protein is Short chain dehydrogenase gsfE.